The chain runs to 87 residues: HssA/B-like protein 31 (87 aa).

Belongs to the hssA/B family.

This is HssA/B-like protein 31 (hssl31) from Dictyostelium discoideum (Social amoeba).